A 73-amino-acid polypeptide reads, in one-letter code: Putative antitoxin M1627_0365 (73 aa).

This sequence belongs to the UPF0330 family.

Its function is as follows. Possibly the antitoxin component of a type II toxin-antitoxin (TA) system. In Saccharolobus islandicus (strain M.16.27) (Sulfolobus islandicus), this protein is Putative antitoxin M1627_0365.